A 175-amino-acid polypeptide reads, in one-letter code: Ribosome maturation factor RimM (175 aa).

In terms of domain architecture, PRC barrel spans 95–175 (SEDEFYWREL…RIEVDWDPGF (81 aa)).

It belongs to the RimM family. In terms of assembly, binds ribosomal protein uS19.

Its subcellular location is the cytoplasm. Functionally, an accessory protein needed during the final step in the assembly of 30S ribosomal subunit, possibly for assembly of the head region. Essential for efficient processing of 16S rRNA. May be needed both before and after RbfA during the maturation of 16S rRNA. It has affinity for free ribosomal 30S subunits but not for 70S ribosomes. In Aliivibrio fischeri (strain MJ11) (Vibrio fischeri), this protein is Ribosome maturation factor RimM.